Reading from the N-terminus, the 1342-residue chain is DNA-directed RNA polymerase subunit beta (1342 aa).

Belongs to the RNA polymerase beta chain family. The RNAP catalytic core consists of 2 alpha, 1 beta, 1 beta' and 1 omega subunit. When a sigma factor is associated with the core the holoenzyme is formed, which can initiate transcription.

The enzyme catalyses RNA(n) + a ribonucleoside 5'-triphosphate = RNA(n+1) + diphosphate. Its function is as follows. DNA-dependent RNA polymerase catalyzes the transcription of DNA into RNA using the four ribonucleoside triphosphates as substrates. This chain is DNA-directed RNA polymerase subunit beta, found in Histophilus somni (strain 2336) (Haemophilus somnus).